The following is a 241-amino-acid chain: Small ribosomal subunit protein uS3 (241 aa).

The region spanning 39–107 (IRKYLEKELK…ETHLNIVEVR (69 aa)) is the KH type-2 domain. The tract at residues 214–241 (ASERRATEGDAAHGGGGDRERGRRRENA) is disordered.

It belongs to the universal ribosomal protein uS3 family. In terms of assembly, part of the 30S ribosomal subunit. Forms a tight complex with proteins S10 and S14.

Its function is as follows. Binds the lower part of the 30S subunit head. Binds mRNA in the 70S ribosome, positioning it for translation. The sequence is that of Small ribosomal subunit protein uS3 from Mesorhizobium japonicum (strain LMG 29417 / CECT 9101 / MAFF 303099) (Mesorhizobium loti (strain MAFF 303099)).